A 185-amino-acid chain; its full sequence is Ribosome-recycling factor (185 aa).

The protein belongs to the RRF family.

The protein resides in the cytoplasm. In terms of biological role, responsible for the release of ribosomes from messenger RNA at the termination of protein biosynthesis. May increase the efficiency of translation by recycling ribosomes from one round of translation to another. This is Ribosome-recycling factor from Pectobacterium carotovorum subsp. carotovorum (strain PC1).